Here is a 249-residue protein sequence, read N- to C-terminus: Ribonuclease PH (249 aa).

Phosphate-binding positions include arginine 86 and 124 to 126 (GTR).

Belongs to the RNase PH family. Homohexameric ring arranged as a trimer of dimers.

It carries out the reaction tRNA(n+1) + phosphate = tRNA(n) + a ribonucleoside 5'-diphosphate. Its function is as follows. Phosphorolytic 3'-5' exoribonuclease that plays an important role in tRNA 3'-end maturation. Removes nucleotide residues following the 3'-CCA terminus of tRNAs; can also add nucleotides to the ends of RNA molecules by using nucleoside diphosphates as substrates, but this may not be physiologically important. Probably plays a role in initiation of 16S rRNA degradation (leading to ribosome degradation) during starvation. This chain is Ribonuclease PH, found in Clostridium botulinum (strain Eklund 17B / Type B).